Consider the following 1750-residue polypeptide: Brefeldin A-inhibited guanine nucleotide-exchange protein 3 (1750 aa).

Alanine 2 is subject to N-acetylalanine. Disordered stretches follow at residues 44-65 (LRSP…IPGP) and 565-596 (EEGS…SSGN). A compositionally biased stretch (polar residues) spans 47-61 (PENSSPVADSESGSS). The segment covering 565-588 (EEGSHPVENGKGDGGHGGFERSDS) has biased composition (basic and acidic residues). Serine 586 is subject to Phosphoserine. The SEC7 domain occupies 601–788 (AIEQRRAYKL…RALYERISRN (188 aa)). Glutamate 703 is a catalytic residue. At serine 1307 the chain carries Phosphoserine.

In terms of assembly, homodimer.

It is found in the cytoplasm. It localises to the cytosol. The protein localises to the membrane. Inhibited by brefeldin A. Activates the ARF proteins by exchanging bound GDP for free GTP. Plays a role in vesicular protein sorting. Involved both in the nuclear division phase and in the nuclear fusion phase. This is Brefeldin A-inhibited guanine nucleotide-exchange protein 3 (BIG3) from Arabidopsis thaliana (Mouse-ear cress).